The primary structure comprises 500 residues: MTSALEKNRPSAAFAFDNSYAGLPQRFFAAQMPTQVAEPWLIKLNEPLAAELGLDVEALRRDGAAIFSGNLVPEGAQPLAMAYAGHQFGGFSPQLGDGRAILLGEVIDRSGRRFDIQLKGAGPTPFSRRGDGRAAIGPVLREYIISEAMFALGIPATRALAAVTTGEPVYREEVLPGAVFTRVATSHIRVGTFQYFAARGDTDGVRALTNYVIDRHYPALKEADNPYLALFEAVSERQAALIARWLHVGFIHGVMNTDNMTVSGETIDFGPCAFMDAYDPATVFSSIDQHGRYAYANQPGIGQWNLARLGETLLPLIDDEPDAAVDKANAVIRAYGERFQTHWLAGMREKIGLAREEDGDLELVQTLLSLMQAQGADFTLTFRRLSDLAGDEAAEPDFAASFREAEASRNWLSRWRERLSRDPQTAGARAAAMRKVNPAFIPRNHRVEQAIEAAVENGDFSLFEALLTVLARPYDDQPDFAPYREPPKPHERVLATFCGT.

G96, G98, R99, K119, D131, G132, R182, and R189 together coordinate ATP. The active-site Proton acceptor is D258. Mg(2+)-binding residues include N259 and D268. D268 provides a ligand contact to ATP.

The protein belongs to the SELO family. Mg(2+) serves as cofactor. Requires Mn(2+) as cofactor.

It catalyses the reaction L-seryl-[protein] + ATP = 3-O-(5'-adenylyl)-L-seryl-[protein] + diphosphate. It carries out the reaction L-threonyl-[protein] + ATP = 3-O-(5'-adenylyl)-L-threonyl-[protein] + diphosphate. The catalysed reaction is L-tyrosyl-[protein] + ATP = O-(5'-adenylyl)-L-tyrosyl-[protein] + diphosphate. The enzyme catalyses L-histidyl-[protein] + UTP = N(tele)-(5'-uridylyl)-L-histidyl-[protein] + diphosphate. It catalyses the reaction L-seryl-[protein] + UTP = O-(5'-uridylyl)-L-seryl-[protein] + diphosphate. It carries out the reaction L-tyrosyl-[protein] + UTP = O-(5'-uridylyl)-L-tyrosyl-[protein] + diphosphate. In terms of biological role, nucleotidyltransferase involved in the post-translational modification of proteins. It can catalyze the addition of adenosine monophosphate (AMP) or uridine monophosphate (UMP) to a protein, resulting in modifications known as AMPylation and UMPylation. The sequence is that of Protein nucleotidyltransferase YdiU from Rhizobium etli (strain CIAT 652).